Reading from the N-terminus, the 619-residue chain is Probable serine/threonine-protein kinase WNK8 (619 aa).

Residues 1–14 are compositionally biased toward basic and acidic residues; that stretch reads MSGARRCGDRRSER. The segment at 1 to 30 is disordered; the sequence is MSGARRCGDRRSERSSVVGDNRNGYVETDP. One can recognise a Protein kinase domain in the interval 35 to 291; that stretch reads GRLSEVLGKG…AEELLLDPFL (257 aa). ATP contacts are provided by residues 115 to 118 and Lys-163; that span reads TELF. Residue Asp-180 is the Proton acceptor of the active site. 4 disordered regions span residues 293–335, 419–464, 508–555, and 585–619; these read PPQN…AKTT, YADD…PGPH, CSAS…SMVD, and GFRDPTTYGSSSSSSSSQHRRRSSSKVDHKHHYMF. The segment covering 419-428 has biased composition (acidic residues); sequence YADDDDDDDV. Low complexity predominate over residues 439–448; the sequence is SSSPTSSQGS. A compositionally biased stretch (basic residues) spans 602–619; that stretch reads QHRRRSSSKVDHKHHYMF.

It belongs to the protein kinase superfamily. Ser/Thr protein kinase family. WNK subfamily.

The catalysed reaction is L-seryl-[protein] + ATP = O-phospho-L-seryl-[protein] + ADP + H(+). It catalyses the reaction L-threonyl-[protein] + ATP = O-phospho-L-threonyl-[protein] + ADP + H(+). The polypeptide is Probable serine/threonine-protein kinase WNK8 (WNK8) (Oryza sativa subsp. japonica (Rice)).